The chain runs to 290 residues: Ig delta chain C region membrane-bound form (290 aa).

The region spanning 5–105 is the Ig-like 1 domain; sequence PDMFLLSECK…WDSQSSKRVT (101 aa). Residues C26 and C78 are joined by a disulfide bond. Residues N58 and N75 are each glycosylated (N-linked (GlcNAc...) asparagine). The disordered stretch occupies residues 89 to 111; it reads PFKFPESWDSQSSKRVTPTLQAK. The span at 96–111 shows a compositional bias: polar residues; it reads WDSQSSKRVTPTLQAK. Residues N112, N135, and N227 are each glycosylated (N-linked (GlcNAc...) asparagine). Residues 133–233 enclose the Ig-like 2 domain; it reads PSNLTVNILT…TKLNASKSLA (101 aa). A helical transmembrane segment spans residues 262–279; that stretch reads GLWPTMCTFVALFLLTLL. The Cytoplasmic segment spans residues 280–290; that stretch reads YSGFVTFIKVK.

As to expression, cell lines producing IgD contain several mRNA species for Ig delta chains. In plasmacytomas, the secreted form is the major component, and the membrane-bound form is a minor component. In spleen, however, the membrane-bound form is the major component. These two forms differ in their C-terminal segments.

Its subcellular location is the cell membrane. The protein is Ig delta chain C region membrane-bound form of Mus musculus (Mouse).